The sequence spans 888 residues: Aconitate hydratase A (888 aa).

The [4Fe-4S] cluster site is built by Cys-433, Cys-499, and Cys-502.

It belongs to the aconitase/IPM isomerase family. In terms of assembly, monomer. It depends on [4Fe-4S] cluster as a cofactor.

It catalyses the reaction citrate = D-threo-isocitrate. The enzyme catalyses (2S,3R)-3-hydroxybutane-1,2,3-tricarboxylate = 2-methyl-cis-aconitate + H2O. The protein operates within carbohydrate metabolism; tricarboxylic acid cycle; isocitrate from oxaloacetate: step 2/2. It participates in organic acid metabolism; propanoate degradation. Involved in the catabolism of short chain fatty acids (SCFA) via the tricarboxylic acid (TCA)(acetyl degradation route) and probably the 2-methylcitrate cycle I (propionate degradation route). Catalyzes the reversible isomerization of citrate to isocitrate via cis-aconitate. Could catalyze the hydration of 2-methyl-cis-aconitate to yield (2R,3S)-2-methylisocitrate. The apo form of AcnA functions as a RNA-binding regulatory protein. This chain is Aconitate hydratase A (acn), found in Streptococcus mutans serotype c (strain ATCC 700610 / UA159).